The sequence spans 193 residues: Holliday junction branch migration complex subunit RuvA (193 aa).

The interval 1–64 is domain I; sequence MIGRIAGVLL…EDAHLLYGFG (64 aa). The segment at 65 to 139 is domain II; it reads TAEERSTFRE…GKIGADLGAM (75 aa). A flexible linker region spans residues 139–143; it reads MAGAA. Residues 144 to 193 are domain III; that stretch reads SASDHASDILNALLALGYSEKEALTAVKNVPAGTGVSEGIKLALKALSKG.

Belongs to the RuvA family. Homotetramer. Forms an RuvA(8)-RuvB(12)-Holliday junction (HJ) complex. HJ DNA is sandwiched between 2 RuvA tetramers; dsDNA enters through RuvA and exits via RuvB. An RuvB hexamer assembles on each DNA strand where it exits the tetramer. Each RuvB hexamer is contacted by two RuvA subunits (via domain III) on 2 adjacent RuvB subunits; this complex drives branch migration. In the full resolvosome a probable DNA-RuvA(4)-RuvB(12)-RuvC(2) complex forms which resolves the HJ.

The protein resides in the cytoplasm. In terms of biological role, the RuvA-RuvB-RuvC complex processes Holliday junction (HJ) DNA during genetic recombination and DNA repair, while the RuvA-RuvB complex plays an important role in the rescue of blocked DNA replication forks via replication fork reversal (RFR). RuvA specifically binds to HJ cruciform DNA, conferring on it an open structure. The RuvB hexamer acts as an ATP-dependent pump, pulling dsDNA into and through the RuvAB complex. HJ branch migration allows RuvC to scan DNA until it finds its consensus sequence, where it cleaves and resolves the cruciform DNA. In Paraburkholderia phytofirmans (strain DSM 17436 / LMG 22146 / PsJN) (Burkholderia phytofirmans), this protein is Holliday junction branch migration complex subunit RuvA.